Reading from the N-terminus, the 162-residue chain is GTP-dependent dephospho-CoA kinase (162 aa).

6 residues coordinate GTP: Asp-40, Val-41, Val-42, Asp-59, Lys-61, and Glu-111.

This sequence belongs to the GTP-dependent DPCK family.

The enzyme catalyses 3'-dephospho-CoA + GTP = GDP + CoA + H(+). It functions in the pathway cofactor biosynthesis; coenzyme A biosynthesis. Its function is as follows. Catalyzes the GTP-dependent phosphorylation of the 3'-hydroxyl group of dephosphocoenzyme A to form coenzyme A (CoA). The sequence is that of GTP-dependent dephospho-CoA kinase from Sulfurisphaera tokodaii (strain DSM 16993 / JCM 10545 / NBRC 100140 / 7) (Sulfolobus tokodaii).